Consider the following 111-residue polypeptide: C-X-C motif chemokine 14 (111 aa).

The signal sequence occupies residues 1–34 (MSLLPRRAPPVSMRLLAAALLLLLLALYTARVDG). 2 disulfide bridges follow: cysteine 37-cysteine 63 and cysteine 39-cysteine 84. The D-box signature appears at 67–81 (MVIITTKSVSRYRGQ).

It belongs to the intercrine alpha (chemokine CxC) family. Ubiquitinated, followed by degradation by the proteasome. As to expression, expressed in heart, brain, placenta, lung, liver, skeletal muscle, kidney and pancreas. Highly expressed in normal tissue without inflammatory stimuli and infrequently expressed in cancer cell lines. Weakly expressed in monocyte-derived dendritic cells. Not detected in lung or unstimulated peripheral blood lymphocytes.

Its subcellular location is the secreted. Its function is as follows. Potent chemoattractant for neutrophils, and weaker for dendritic cells. Not chemotactic for T-cells, B-cells, monocytes, natural killer cells or granulocytes. Does not inhibit proliferation of myeloid progenitors in colony formation assays. The sequence is that of C-X-C motif chemokine 14 (CXCL14) from Homo sapiens (Human).